Reading from the N-terminus, the 277-residue chain is MKSGIRVALVTGSNKGIGLAIVRDLCRLFSGEVVLTARDVARGQAAVQQLQAEGLSPRFHQLDIDDLQSIRTLRDFLLKEYGGLDVLVNNAGIAFKVADPTPFHIQAEVTMKTNFFGTRDVCTELLPLIKPQGRVVNISSMMSLRALKSCSPELQQKFRSETITEEELVGLMNKFAEDTKKGVHQKEGWPSSAYGVTKIGVTVLSRIHARKLSEQRKGDKILLNACCPGWVRTDMAGPSATKSPEEGAETPVYLALLPLDAEGPHGQFVMEKRVEQW.

NADP(+)-binding positions include 10 to 34, 63 to 64, and asparagine 90; these read VTGSNKGIGLAIVRDLCRLFSGEVV and DI. Serine 30 bears the Phosphoserine mark. Glutathione is bound by residues 95–97 and glutamine 106; that span reads FKV. Serine 140 provides a ligand contact to substrate. 193–194 is a binding site for glutathione; that stretch reads AY. The active-site Proton acceptor is the tyrosine 194. NADP(+) contacts are provided by residues 194 to 198 and 231 to 233; these read YGVTK and VRT.

This sequence belongs to the short-chain dehydrogenases/reductases (SDR) family. As to quaternary structure, monomer.

Its subcellular location is the cytoplasm. The catalysed reaction is a secondary alcohol + NADP(+) = a ketone + NADPH + H(+). It carries out the reaction prostaglandin F2alpha + NADP(+) = prostaglandin E2 + NADPH + H(+). The enzyme catalyses prostaglandin E1 + NADP(+) = 15-oxoprostaglandin E1 + NADPH + H(+). It catalyses the reaction prostaglandin D2 + NADP(+) = 15-oxoprostaglandin D2 + NADPH + H(+). The catalysed reaction is menadione + NADPH + H(+) = menadiol + NADP(+). It carries out the reaction prostaglandin E2 + NADP(+) = 15-oxoprostaglandin E2 + NADPH + H(+). The enzyme catalyses prostaglandin F2alpha + NADP(+) = 15-oxoprostaglandin F2alpha + NADPH + H(+). It catalyses the reaction daunorubicin + NADPH + H(+) = 13-dihydrodaunorubicin + NADP(+). The catalysed reaction is S-nitrosoglutathione + NADPH + H(+) = S-(hydroxysulfenamide)glutathione + NADP(+). It carries out the reaction a primary alcohol + NADP(+) = an aldehyde + NADPH + H(+). The enzyme catalyses cortisol + NADPH + H(+) = 20beta-dihydrocortisol + NADP(+). It catalyses the reaction corticosterone + NADPH + H(+) = 20beta-dihydrocorticosterone + NADP(+). In terms of biological role, NADPH-dependent reductase with broad substrate specificity. Catalyzes the reduction of a wide variety of carbonyl compounds including quinones, prostaglandins, menadione, plus various xenobiotics. Catalyzes the reduction of the antitumor anthracyclines doxorubicin and daunorubicin to the cardiotoxic compounds doxorubicinol and daunorubicinol. Can convert prostaglandin E to prostaglandin F2-alpha. Can bind glutathione, which explains its higher affinity for glutathione-conjugated substrates. Catalyzes the reduction of S-nitrosoglutathione. In addition, participates in the glucocorticoid metabolism by catalyzing the NADPH-dependent cortisol/corticosterone into 20beta-dihydrocortisol (20b-DHF) or 20beta-corticosterone (20b-DHB), which are weak agonists of NR3C1 and NR3C2 in adipose tissue. The protein is Carbonyl reductase [NADPH] 1 of Macaca fascicularis (Crab-eating macaque).